We begin with the raw amino-acid sequence, 110 residues long: Phosphoribosyl-ATP pyrophosphatase (110 aa).

This sequence belongs to the PRA-PH family.

The protein localises to the cytoplasm. It carries out the reaction 1-(5-phospho-beta-D-ribosyl)-ATP + H2O = 1-(5-phospho-beta-D-ribosyl)-5'-AMP + diphosphate + H(+). Its pathway is amino-acid biosynthesis; L-histidine biosynthesis; L-histidine from 5-phospho-alpha-D-ribose 1-diphosphate: step 2/9. The protein is Phosphoribosyl-ATP pyrophosphatase of Pseudomonas syringae pv. tomato (strain ATCC BAA-871 / DC3000).